Consider the following 320-residue polypeptide: Probable cell division protein WhiA (320 aa).

Residues 282–315 (SLEELGRAARPQISKDAVAGRIRRLLQRAEKAEQ) constitute a DNA-binding region (H-T-H motif).

This sequence belongs to the WhiA family.

In terms of biological role, involved in cell division and chromosome segregation. The polypeptide is Probable cell division protein WhiA (Bifidobacterium animalis subsp. lactis (strain AD011)).